Here is a 467-residue protein sequence, read N- to C-terminus: Hydroxyacid-oxoacid transhydrogenase, mitochondrial (467 aa).

An N6-acetyllysine modification is found at lysine 445. Serine 452 carries the post-translational modification Phosphoserine.

This sequence belongs to the iron-containing alcohol dehydrogenase family. Hydroxyacid-oxoacid transhydrogenase subfamily.

It localises to the mitochondrion. It catalyses the reaction (S)-3-hydroxybutanoate + 2-oxoglutarate = (R)-2-hydroxyglutarate + acetoacetate. It carries out the reaction 4-hydroxybutanoate + 2-oxoglutarate = (R)-2-hydroxyglutarate + succinate semialdehyde. Catalyzes the cofactor-independent reversible oxidation of gamma-hydroxybutyrate (GHB) to succinic semialdehyde (SSA) coupled to reduction of 2-ketoglutarate (2-KG) to D-2-hydroxyglutarate (D-2-HG). L-3-hydroxybutyrate (L-3-OHB) is also a substrate for HOT when using 2-KG as hydrogen acceptor, resulting in the formation of D-2-HG. The sequence is that of Hydroxyacid-oxoacid transhydrogenase, mitochondrial (ADHFE1) from Pongo abelii (Sumatran orangutan).